Reading from the N-terminus, the 276-residue chain is Large ribosomal subunit protein uL2 (276 aa).

2 disordered regions span residues 1-20 (MGIK…TTND) and 219-276 (TVRG…RRKK). The span at 7–20 (NPTTNGRRNMTTND) shows a compositional bias: polar residues.

It belongs to the universal ribosomal protein uL2 family. In terms of assembly, part of the 50S ribosomal subunit. Forms a bridge to the 30S subunit in the 70S ribosome.

Functionally, one of the primary rRNA binding proteins. Required for association of the 30S and 50S subunits to form the 70S ribosome, for tRNA binding and peptide bond formation. It has been suggested to have peptidyltransferase activity; this is somewhat controversial. Makes several contacts with the 16S rRNA in the 70S ribosome. This is Large ribosomal subunit protein uL2 from Bacillus mycoides (strain KBAB4) (Bacillus weihenstephanensis).